A 585-amino-acid polypeptide reads, in one-letter code: Arginine--tRNA ligase (585 aa).

Residues A131–H141 carry the 'HIGH' region motif.

This sequence belongs to the class-I aminoacyl-tRNA synthetase family. As to quaternary structure, monomer.

The protein localises to the cytoplasm. The enzyme catalyses tRNA(Arg) + L-arginine + ATP = L-arginyl-tRNA(Arg) + AMP + diphosphate. The chain is Arginine--tRNA ligase from Brucella ovis (strain ATCC 25840 / 63/290 / NCTC 10512).